The following is a 357-amino-acid chain: MLDRLQIIKQKFDEISDLIIQPDVIADQKRYVALNQEYKGLKSLVEKRDEYVILMANIEEANEIIADGSDADMVEMAKMQLEEAKERLPELEEEIKFLLIPKDAEDAKNVMVEIRAGTGGDEASIFAGDLFRMYTKYCENRGWRTSVVDMNEGTSGGFKEVIFEVTGEDVYGTLKFEAGVHRVQRVPQTETQGRVHTSAATVMVLPEAEEFDVQIDMNDVRVDFFCSSGPGGQSVNTTKSAVRLTHIPTGLVAQCQDQKSQHKNKDKAFGVLRSRLYEQELAKKQADDAVKRTSQVSSGDRSAKIRTYNYSQGRVTDHRIGLDVFDMDGVMNGKIQKFVDELQLVNNMEKLKESEIF.

An N5-methylglutamine modification is found at Q233.

Belongs to the prokaryotic/mitochondrial release factor family. Post-translationally, methylated by PrmC. Methylation increases the termination efficiency of RF1.

It is found in the cytoplasm. Its function is as follows. Peptide chain release factor 1 directs the termination of translation in response to the peptide chain termination codons UAG and UAA. The chain is Peptide chain release factor 1 from Flavobacterium psychrophilum (strain ATCC 49511 / DSM 21280 / CIP 103535 / JIP02/86).